The chain runs to 388 residues: MHLSALLTLLPAVLAAPATIGRRAEPAPLFTPQAESIIADKYIVKFKDDIARIATDDTVSALTSKADFVYEHAFHGFAGSLTKEELKMLREHPGVDFIEKDAVMRISGITEQSGAPWGLGRISHRSKGSTTYRYDDSAGQGTCVYIIDTGIEASHPEFEGRATFLKSFISGQNTDGHGHGTHCAGTIGSKTYGVAKKAKLYGVKVLDNQGSGSYSGIISGMDYVAQDSKTRGCPNGAIASMSLGGGYSASVNQGAAALVNSGVFLAVAAGNDNRDAQNTSPASEPSACTVGASAENDSRSSFSNYGRVVDIFAPGSNVLSTWIVGRTNSISGTSMATPHIAGLAAYLSALQGKTTPAALCKKIQDTATKNVLTGVPSGTVNYLAYNGA.

Residues 1–18 form the signal peptide; it reads MHLSALLTLLPAVLAAPA. Positions 19–107 are excised as a propeptide; it reads TIGRRAEPAP…IEKDAVMRIS (89 aa). The region spanning 41–106 is the Inhibitor I9 domain; the sequence is KYIVKFKDDI…FIEKDAVMRI (66 aa). The 273-residue stretch at 116–388 folds into the Peptidase S8 domain; sequence PWGLGRISHR…TVNYLAYNGA (273 aa). Cystine bridges form between C143–C233 and C288–C360. Catalysis depends on charge relay system residues D148 and H179. The N-linked (GlcNAc...) asparagine glycan is linked to N296. The Charge relay system role is filled by S334.

It belongs to the peptidase S8 family.

Its subcellular location is the secreted. Functionally, capable of breaching the insect cuticle. This chain is Cuticle-degrading protease (PR1), found in Metarhizium anisopliae (Entomophthora anisopliae).